A 692-amino-acid chain; its full sequence is Zinc finger protein 180 (692 aa).

In terms of domain architecture, KRAB spans 72 to 145 (VNFKIVTVDF…GVKIERFTRD (74 aa)). Glycyl lysine isopeptide (Lys-Gly) (interchain with G-Cter in SUMO2) cross-links involve residues Lys-138, Lys-159, Lys-168, Lys-191, Lys-198, Lys-226, Lys-304, Lys-313, and Lys-330. 12 C2H2-type zinc fingers span residues 353–375 (FECNQCGKSFSWSSHLVAHQRTH), 381–403 (YECSECGKSFSRSSHLVSHQRTH), 409–431 (YRCNQCGKSFSQSYVLVVHQRTH), 437–459 (YECNQCGKSFRQSYKLIAHQRTH), 465–487 (YECNQCGKSFIQSYKLIAHQRIH), 493–515 (YECNQCGKSFSQSYKLVAHQRTH), 521–543 (FECNQCGKSFSWSSQLVAHQRTH), 549–571 (YECSECGKSFNRSSHLVMHQRIH), 577–599 (YECNQCGKSFSQSYVLVVHQRTH), 605–627 (YECSQCGKSFRQSSCLTQHQRTH), 633–655 (FECNQCGKTFSLSARLIVHQRTH), and 661–683 (FTCIQCGKAFINSYKLIRHQATH).

Belongs to the krueppel C2H2-type zinc-finger protein family.

Its subcellular location is the nucleus. In terms of biological role, may be involved in transcriptional regulation. The polypeptide is Zinc finger protein 180 (ZNF180) (Homo sapiens (Human)).